Here is a 642-residue protein sequence, read N- to C-terminus: Threonine--tRNA ligase (642 aa).

The region spanning 1–61 (MPVITLPDGS…DTDAQLAIIT (61 aa)) is the TGS domain. The tract at residues 243-534 (DHRKIGKQLD…LTEEFAGFFP (292 aa)) is catalytic. Cysteine 334, histidine 385, and histidine 511 together coordinate Zn(2+).

Belongs to the class-II aminoacyl-tRNA synthetase family. In terms of assembly, homodimer. Requires Zn(2+) as cofactor.

It is found in the cytoplasm. It carries out the reaction tRNA(Thr) + L-threonine + ATP = L-threonyl-tRNA(Thr) + AMP + diphosphate + H(+). Catalyzes the attachment of threonine to tRNA(Thr) in a two-step reaction: L-threonine is first activated by ATP to form Thr-AMP and then transferred to the acceptor end of tRNA(Thr). Also edits incorrectly charged L-seryl-tRNA(Thr). This is Threonine--tRNA ligase from Pectobacterium atrosepticum (strain SCRI 1043 / ATCC BAA-672) (Erwinia carotovora subsp. atroseptica).